We begin with the raw amino-acid sequence, 182 residues long: Putative manganese efflux pump MntP (182 aa).

The next 6 membrane-spanning stretches (helical) occupy residues 6 to 26 (LIPLIIMAFALGMDAFSVSLG), 37 to 57 (ILYIGVTIGIFHIIMPFIGMV), 71 to 91 (HFAGAILLIGLGFYIVYSSIL), 101 to 121 (IGISLFVFAFGVSIDSFSVGL), 131 to 151 (IITILLFGFVSMLLAWIGLLI), and 162 to 182 (YGEIVGGIILVGFGLYLLFPI).

Belongs to the MntP (TC 9.B.29) family.

The protein localises to the cell membrane. Its function is as follows. Probably functions as a manganese efflux pump. The sequence is that of Putative manganese efflux pump MntP from Bacillus anthracis (strain A0248).